A 272-amino-acid polypeptide reads, in one-letter code: Putative hydro-lyase RPB_3621 (272 aa).

It belongs to the D-glutamate cyclase family.

The chain is Putative hydro-lyase RPB_3621 from Rhodopseudomonas palustris (strain HaA2).